A 736-amino-acid chain; its full sequence is Prolyl 3-hydroxylase 3 (736 aa).

The signal sequence occupies residues 1-20 (MLRLLRPLLLLLLLPPPGSP). TPR repeat units follow at residues 37-70 (PDLL…QAAL), 154-187 (REPY…NPMH), and 216-249 (HWAA…SLAQ). Residues 253-275 (CRADCEGPEEQQGAEEEEDGAAS) are disordered. Over residues 258–272 (EGPEEQQGAEEEEDG) the composition is skewed to acidic residues. The TPR 4 repeat unit spans residues 316 to 349 (PNQLRRLHEAHAQVGNLSQAIENVLSVLLFYPED). Residues Asn331 and Asn462 are each glycosylated (N-linked (GlcNAc...) asparagine). The Fe2OG dioxygenase domain occupies 561–675 (THLVCRSAIE…RCALALWHTW (115 aa)). 3 residues coordinate Fe cation: His584, Asp586, and His656. Arg666 is an active-site residue. A coiled-coil region spans residues 681–709 (EQEWIEAKELLQESQEEEEEEEEEMPSKD). Positions 689-736 (ELLQESQEEEEEEEEEMPSKDPSPEPPSRRHQRVQDKTGRAPRVREEL) are disordered. Residues 694 to 704 (SQEEEEEEEEE) show a composition bias toward acidic residues. Basic and acidic residues predominate over residues 721–736 (RVQDKTGRAPRVREEL). The Prevents secretion from ER motif lies at 733–736 (REEL).

The protein belongs to the leprecan family. In terms of assembly, identified in a complex with PLOD1 and P3H4. Requires Fe cation as cofactor. The cofactor is L-ascorbate. In terms of tissue distribution, detected in fetal cartilage (at protein level). Weak expression in heart, lung, ovary and skeletal muscle.

It localises to the endoplasmic reticulum. It catalyses the reaction L-prolyl-[collagen] + 2-oxoglutarate + O2 = trans-3-hydroxy-L-prolyl-[collagen] + succinate + CO2. Functionally, part of a complex composed of PLOD1, P3H3 and P3H4 that catalyzes hydroxylation of lysine residues in collagen alpha chains and is required for normal assembly and cross-linkling of collagen fibrils. Required for normal hydroxylation of lysine residues in type I collagen chains in skin, bone, tendon, aorta and cornea. Required for normal skin stability via its role in hydroxylation of lysine residues in collagen alpha chains and in collagen fibril assembly. Apparently not required for normal prolyl 3-hydroxylation on collagen chains, possibly because it functions redundantly with other prolyl 3-hydroxylases. This chain is Prolyl 3-hydroxylase 3, found in Homo sapiens (Human).